The primary structure comprises 153 residues: Pheromone-binding protein Gp-9 (153 aa).

The first 19 residues, 1–19 (MKTFVLHIFIFALVAFASA), serve as a signal peptide directing secretion. 3 cysteine pairs are disulfide-bonded: Cys-37–Cys-77, Cys-73–Cys-129, and Cys-118–Cys-138.

This sequence belongs to the PBP/GOBP family. As to quaternary structure, homodimer.

It localises to the secreted. Colony queen number, a major feature of social organization, is associated with worker genotype for Gp-9. Colonies are headed by either a single reproductive queen (monogyne form) or multiple queens (polygyne form). Differences in worker Gp-9 genotypes between social forms may cause differences in workers' abilities to recognize queens and regulate their numbers. This Solenopsis pusillignis (Fire ant) protein is Pheromone-binding protein Gp-9.